Consider the following 350-residue polypeptide: D-alanine--D-alanine ligase (350 aa).

Positions 143 to 344 constitute an ATP-grasp domain; that stretch reads KRILSTFGIS…FKSLINKLIL (202 aa). 172-227 lines the ATP pocket; the sequence is INNIKFPCCIKPSNQGSSFGVNVANDFISLKESIDVAFLYSKKILIEPFIQGREIE. Residues D298, E311, and N313 each coordinate Mg(2+).

The protein belongs to the D-alanine--D-alanine ligase family. Requires Mg(2+) as cofactor. It depends on Mn(2+) as a cofactor.

It is found in the cytoplasm. It carries out the reaction 2 D-alanine + ATP = D-alanyl-D-alanine + ADP + phosphate + H(+). The protein operates within cell wall biogenesis; peptidoglycan biosynthesis. Its function is as follows. Cell wall formation. The sequence is that of D-alanine--D-alanine ligase from Wigglesworthia glossinidia brevipalpis.